The chain runs to 351 residues: S-adenosylmethionine:tRNA ribosyltransferase-isomerase (351 aa).

Belongs to the QueA family. In terms of assembly, monomer.

It localises to the cytoplasm. It catalyses the reaction 7-aminomethyl-7-carbaguanosine(34) in tRNA + S-adenosyl-L-methionine = epoxyqueuosine(34) in tRNA + adenine + L-methionine + 2 H(+). The protein operates within tRNA modification; tRNA-queuosine biosynthesis. Transfers and isomerizes the ribose moiety from AdoMet to the 7-aminomethyl group of 7-deazaguanine (preQ1-tRNA) to give epoxyqueuosine (oQ-tRNA). In Hyphomonas neptunium (strain ATCC 15444), this protein is S-adenosylmethionine:tRNA ribosyltransferase-isomerase.